A 160-amino-acid polypeptide reads, in one-letter code: Arsenate reductase 2.1 (160 aa).

The 102-residue stretch at 42 to 143 (SNPRVAIIDV…WELSGQPVCR (102 aa)) folds into the Rhodanese domain. Residue Cys-94 is the Cysteine persulfide intermediate of the active site.

It catalyses the reaction [glutaredoxin]-dithiol + arsenate + glutathione + H(+) = glutathionyl-S-S-[glutaredoxin] + arsenite + H2O. Possesses arsenate reductase activity in vitro. Catalyzes the reduction of arsenate [As(V)] to arsenite [As(III)]. May play a role in arsenic retention in roots. Functionally, possesses phosphatase activity towards p-nitrophenyl phosphate in vitro. This is Arsenate reductase 2.1 (ACR2.1) from Oryza sativa subsp. japonica (Rice).